The following is a 303-amino-acid chain: Probable 5-dehydro-4-deoxyglucarate dehydratase (303 aa).

The protein belongs to the DapA family.

The catalysed reaction is 5-dehydro-4-deoxy-D-glucarate + H(+) = 2,5-dioxopentanoate + CO2 + H2O. The protein operates within carbohydrate acid metabolism; D-glucarate degradation; 2,5-dioxopentanoate from D-glucarate: step 2/2. The sequence is that of Probable 5-dehydro-4-deoxyglucarate dehydratase from Acidovorax ebreus (strain TPSY) (Diaphorobacter sp. (strain TPSY)).